Reading from the N-terminus, the 115-residue chain is NADH-ubiquinone oxidoreductase chain 3 (115 aa).

3 helical membrane passes run 3 to 23 (FVLI…ITFW), 55 to 75 (FFLV…LLPL), and 84 to 104 (LPLM…SLAY).

Belongs to the complex I subunit 3 family. In terms of assembly, core subunit of respiratory chain NADH dehydrogenase (Complex I) which is composed of 45 different subunits. Interacts with TMEM186. Interacts with TMEM242.

The protein resides in the mitochondrion inner membrane. The enzyme catalyses a ubiquinone + NADH + 5 H(+)(in) = a ubiquinol + NAD(+) + 4 H(+)(out). Functionally, core subunit of the mitochondrial membrane respiratory chain NADH dehydrogenase (Complex I) which catalyzes electron transfer from NADH through the respiratory chain, using ubiquinone as an electron acceptor. Essential for the catalytic activity of complex I. This chain is NADH-ubiquinone oxidoreductase chain 3, found in Pan troglodytes (Chimpanzee).